Consider the following 393-residue polypeptide: Dual-specificity RNA methyltransferase RlmN (393 aa).

Residue Glu114 is the Proton acceptor of the active site. In terms of domain architecture, Radical SAM core spans 120–359 (EGDRATLCVS…VIVRKTRGDD (240 aa)). A disulfide bridge links Cys127 with Cys364. [4Fe-4S] cluster contacts are provided by Cys134, Cys138, and Cys141. Residues 188-189 (GE), Ser220, 242-244 (SLH), and Asn321 each bind S-adenosyl-L-methionine. The active-site S-methylcysteine intermediate is the Cys364.

This sequence belongs to the radical SAM superfamily. RlmN family. [4Fe-4S] cluster is required as a cofactor.

The protein localises to the cytoplasm. It carries out the reaction adenosine(2503) in 23S rRNA + 2 reduced [2Fe-2S]-[ferredoxin] + 2 S-adenosyl-L-methionine = 2-methyladenosine(2503) in 23S rRNA + 5'-deoxyadenosine + L-methionine + 2 oxidized [2Fe-2S]-[ferredoxin] + S-adenosyl-L-homocysteine. It catalyses the reaction adenosine(37) in tRNA + 2 reduced [2Fe-2S]-[ferredoxin] + 2 S-adenosyl-L-methionine = 2-methyladenosine(37) in tRNA + 5'-deoxyadenosine + L-methionine + 2 oxidized [2Fe-2S]-[ferredoxin] + S-adenosyl-L-homocysteine. Specifically methylates position 2 of adenine 2503 in 23S rRNA and position 2 of adenine 37 in tRNAs. m2A2503 modification seems to play a crucial role in the proofreading step occurring at the peptidyl transferase center and thus would serve to optimize ribosomal fidelity. The protein is Dual-specificity RNA methyltransferase RlmN of Haemophilus ducreyi (strain 35000HP / ATCC 700724).